The primary structure comprises 197 residues: Putative RNA polymerase II subunit B1 CTD phosphatase rtr1 (197 aa).

The RTR1-type zinc finger occupies 60-139 (EARKYLRKSD…LSDEPLWIRE (80 aa)). 4 residues coordinate Zn(2+): Cys-83, Cys-88, Cys-115, and Cys-119.

It belongs to the RPAP2 family.

The protein resides in the cytoplasm. Its subcellular location is the nucleus. The catalysed reaction is O-phospho-L-seryl-[protein] + H2O = L-seryl-[protein] + phosphate. It carries out the reaction O-phospho-L-threonyl-[protein] + H2O = L-threonyl-[protein] + phosphate. Its function is as follows. Putative RNA polymerase II subunit B1 C-terminal domain (CTD) phosphatase involved in RNA polymerase II transcription regulation. The protein is Putative RNA polymerase II subunit B1 CTD phosphatase rtr1 of Schizosaccharomyces pombe (strain 972 / ATCC 24843) (Fission yeast).